A 323-amino-acid polypeptide reads, in one-letter code: Elongation factor P--(R)-beta-lysine ligase (323 aa).

Position 76 to 78 (76 to 78) interacts with substrate; that stretch reads SPE. ATP-binding positions include 100–102 and Asn109; that span reads RNE. Tyr118 serves as a coordination point for substrate. 242-243 lines the ATP pocket; it reads EL. Residue Glu249 coordinates substrate. Gly298 contributes to the ATP binding site.

This sequence belongs to the class-II aminoacyl-tRNA synthetase family. EpmA subfamily. Homodimer.

It catalyses the reaction D-beta-lysine + L-lysyl-[protein] + ATP = N(6)-((3R)-3,6-diaminohexanoyl)-L-lysyl-[protein] + AMP + diphosphate + H(+). In terms of biological role, with EpmB is involved in the beta-lysylation step of the post-translational modification of translation elongation factor P (EF-P). Catalyzes the ATP-dependent activation of (R)-beta-lysine produced by EpmB, forming a lysyl-adenylate, from which the beta-lysyl moiety is then transferred to the epsilon-amino group of a conserved specific lysine residue in EF-P. The protein is Elongation factor P--(R)-beta-lysine ligase of Histophilus somni (strain 129Pt) (Haemophilus somnus).